A 55-amino-acid chain; its full sequence is Large ribosomal subunit protein bL33 (55 aa).

It belongs to the bacterial ribosomal protein bL33 family.

This chain is Large ribosomal subunit protein bL33, found in Rhodospirillum centenum (strain ATCC 51521 / SW).